Reading from the N-terminus, the 469-residue chain is MARGLGAPHWVAVGLLTWATLGLLVAGLGGHDDLHDDLQEDFHGHSHRHSHEDFHHGHSHAHGHGHTHESIWHGHTHDHDHGHSHEDLHHGHSHGYSHESLYHRGHGHDHEHSHGGYGESGAPGIKQDLDAVTLWAYALGATVLISAAPFFVLFLIPVESNSPRHRSLLQILLSFASGGLLGDAFLHLIPHALEPHSHHTLEQPGHGHSHSGQGPILSVGLWVLSGIVAFLVVEKFVRHVKGGHGHSHGHGHAHSHTRGSHGHGRQERSTKEKQSSEEEEKETRGVQKRRGGSTVPKDGPVRPQNAEEEKRGLDLRVSGYLNLAADLAHNFTDGLAIGASFRGGRGLGILTTMTVLLHEVPHEVGDFAILVQSGCSKKQAMRLQLLTAVGALAGTACALLTEGGAVGSEIAGGAGPGWVLPFTAGGFIYVATVSVLPELLREASPLQSLLEVLGLLGGVIMMVLIAHLE.

A helical transmembrane segment spans residues 10 to 30 (WVAVGLLTWATLGLLVAGLGG). Composition is skewed to basic and acidic residues over residues 42-56 (FHGH…DFHH) and 66-114 (HTHE…EHSH). Residues 42–121 (FHGHSHRHSH…HSHGGYGESG (80 aa)) are disordered. Pros-methylhistidine is present on H66. The next 3 helical transmembrane spans lie at 138–158 (ALGA…LIPV), 169–189 (LQIL…LHLI), and 214–234 (GPIL…LVVE). Residues 242–263 (GGHGHSHGHGHAHSHTRGSHGH) show a composition bias toward basic residues. A disordered region spans residues 242 to 310 (GGHGHSHGHG…VRPQNAEEEK (69 aa)). A compositionally biased stretch (basic and acidic residues) spans 264–285 (GRQERSTKEKQSSEEEEKETRG). Residues S275 and S276 each carry the phosphoserine; by CK2 modification. Transmembrane regions (helical) follow at residues 381–401 (MRLQ…ALLT) and 417–436 (GWVL…VSVL).

It belongs to the ZIP transporter (TC 2.A.5) family. KE4/Catsup subfamily. As to quaternary structure, homodimer. In terms of processing, rapidly phosphorylated by CK2 following Zn(2+) treatment. This phosphorylation is required for efficient cytosolic Zn(2+) release. Methylation at some His residue by METTL9 leads to reduced zinc-binding. In terms of tissue distribution, widely expressed.

The protein localises to the endoplasmic reticulum membrane. It is found in the golgi apparatus. Its subcellular location is the cis-Golgi network membrane. The catalysed reaction is Zn(2+)(in) = Zn(2+)(out). Phosphorylation activates zinc transport activity. In terms of biological role, transports Zn(2+) from the endoplasmic reticulum (ER)/Golgi apparatus to the cytosol, playing an essential role in the regulation of cytosolic zinc levels. Acts as a gatekeeper of zinc release from intracellular stores, requiring post-translational activation by phosphorylation, resulting in activation of multiple downstream pathways leading to cell growth and proliferation. Has an essential role in B cell development and is required for proper B cell receptor signaling. Plays an important role in maintaining intestinal epithelial homeostasis and skin dermis development by regulating ER function. Controls cell signaling pathways involved in glucose metabolism in skeletal muscle. Has a protective role against ER stress in different biological contexts. Mediates Zn(2+)-induced ferroptosis. The sequence is that of Zinc transporter SLC39A7 (SLC39A7) from Homo sapiens (Human).